A 229-amino-acid chain; its full sequence is Uracil-DNA glycosylase (229 aa).

Asp-64 functions as the Proton acceptor in the catalytic mechanism.

The protein belongs to the uracil-DNA glycosylase (UDG) superfamily. UNG family.

It is found in the cytoplasm. The enzyme catalyses Hydrolyzes single-stranded DNA or mismatched double-stranded DNA and polynucleotides, releasing free uracil.. Functionally, excises uracil residues from the DNA which can arise as a result of misincorporation of dUMP residues by DNA polymerase or due to deamination of cytosine. The sequence is that of Uracil-DNA glycosylase from Escherichia coli O45:K1 (strain S88 / ExPEC).